A 360-amino-acid chain; its full sequence is Phospho-N-acetylmuramoyl-pentapeptide-transferase (360 aa).

10 helical membrane passes run Tyr-21 to Gly-41, Thr-71 to Ala-91, Ser-94 to Ile-114, Leu-142 to Val-162, Ile-168 to Ser-188, Gly-199 to Thr-219, Ala-236 to Phe-256, Val-263 to Leu-283, Phe-288 to Val-308, and Val-338 to Lys-358.

It belongs to the glycosyltransferase 4 family. MraY subfamily. The cofactor is Mg(2+).

It is found in the cell inner membrane. The catalysed reaction is UDP-N-acetyl-alpha-D-muramoyl-L-alanyl-gamma-D-glutamyl-meso-2,6-diaminopimeloyl-D-alanyl-D-alanine + di-trans,octa-cis-undecaprenyl phosphate = di-trans,octa-cis-undecaprenyl diphospho-N-acetyl-alpha-D-muramoyl-L-alanyl-D-glutamyl-meso-2,6-diaminopimeloyl-D-alanyl-D-alanine + UMP. It participates in cell wall biogenesis; peptidoglycan biosynthesis. Its function is as follows. Catalyzes the initial step of the lipid cycle reactions in the biosynthesis of the cell wall peptidoglycan: transfers peptidoglycan precursor phospho-MurNAc-pentapeptide from UDP-MurNAc-pentapeptide onto the lipid carrier undecaprenyl phosphate, yielding undecaprenyl-pyrophosphoryl-MurNAc-pentapeptide, known as lipid I. This is Phospho-N-acetylmuramoyl-pentapeptide-transferase from Tolumonas auensis (strain DSM 9187 / NBRC 110442 / TA 4).